We begin with the raw amino-acid sequence, 343 residues long: MAVCPYGAAAVVMALLSAAIAFHCSPLLAVLQRALSLHTAHATKDMDNLFQLVRNIVPALTSKKHKGQDGRIGIVGGCQEYTGAPYFAGISALKVGADLTHVFCAREAAPVIKSYSPELIVHPVLDSSDAVEEVEKWLPRLHALVVGPGLGRDDLLLNNVRGILESTKARDIPVVIDADGLWLIAQRPALVHGYQKAVLTPNHVEFSRLWDAVLSSPMDTSNHSGSVLKLSQALGNITIVQKGEQDLISNGQQVLVCNQEGSSRRCGGQGDLLSGSLGVMAHWALRAGPEKTNGSSPLLVAAWGACTLTRECNHLAFQKYGRSTTTTDMIAEVGAAFSKLFTT.

A mitochondrion-targeting transit peptide spans 1 to 42 (MAVCPYGAAAVVMALLSAAIAFHCSPLLAVLQRALSLHTAHA). A YjeF C-terminal domain is found at 49–340 (LFQLVRNIVP…AEVGAAFSKL (292 aa)). Lys-63 is modified (N6-acetyllysine). Position 81 is a phosphotyrosine (Tyr-81). Residues Gly-149 and 202 to 208 (NHVEFSR) each bind (6S)-NADPHX. ATP is bound by residues 242–246 (KGEQD) and 261–270 (GSSRRCGGQG). Position 271 (Asp-271) interacts with (6S)-NADPHX.

The protein belongs to the NnrD/CARKD family. Mg(2+) is required as a cofactor.

It is found in the mitochondrion. It carries out the reaction (6S)-NADHX + ATP = ADP + phosphate + NADH + H(+). It catalyses the reaction (6S)-NADPHX + ATP = ADP + phosphate + NADPH + H(+). In terms of biological role, catalyzes the dehydration of the S-form of NAD(P)HX at the expense of ATP, which is converted to ADP. Together with NAD(P)HX epimerase, which catalyzes the epimerization of the S- and R-forms, the enzyme allows the repair of both epimers of NAD(P)HX, a damaged form of NAD(P)H that is a result of enzymatic or heat-dependent hydration. This chain is ATP-dependent (S)-NAD(P)H-hydrate dehydratase, found in Rattus norvegicus (Rat).